The primary structure comprises 87 residues: Mitotic-spindle organizing protein 1 (87 aa).

This sequence belongs to the MOZART1 family. In terms of assembly, part of the gamma-tubulin complex.

It is found in the cytoplasm. The protein localises to the cytoskeleton. Its subcellular location is the microtubule organizing center. The protein resides in the spindle pole body. Required for gamma-tubulin complex recruitment to the microtubule organizing center (MTOC). The protein is Mitotic-spindle organizing protein 1 of Chaetomium globosum (strain ATCC 6205 / CBS 148.51 / DSM 1962 / NBRC 6347 / NRRL 1970) (Soil fungus).